The chain runs to 437 residues: Glutamate-1-semialdehyde 2,1-aminomutase (437 aa).

Lys273 bears the N6-(pyridoxal phosphate)lysine mark.

It belongs to the class-III pyridoxal-phosphate-dependent aminotransferase family. HemL subfamily. As to quaternary structure, homodimer. Requires pyridoxal 5'-phosphate as cofactor.

The protein resides in the cytoplasm. The catalysed reaction is (S)-4-amino-5-oxopentanoate = 5-aminolevulinate. It participates in porphyrin-containing compound metabolism; protoporphyrin-IX biosynthesis; 5-aminolevulinate from L-glutamyl-tRNA(Glu): step 2/2. In Chlamydia caviae (strain ATCC VR-813 / DSM 19441 / 03DC25 / GPIC) (Chlamydophila caviae), this protein is Glutamate-1-semialdehyde 2,1-aminomutase.